A 346-amino-acid polypeptide reads, in one-letter code: MNFLRSTAATLLDKYTPVSHTSTFRNTGQITPEEFVAAGDYLTFKFPSWSWADADSPSKRLPFLPPGKQFLVTRHVPCHRRLNDDFAGDAGHEEALVEGNKGGADDDGWLRTGSMTSSQPLRVREVRTVDDAGNVGDREVVDEDDIPDMEDDDDDEAIIRAEGDNSNSGKRTYTLYITYANAYKCPRMYMSGYLSNGQPLPPHLMMEDIVGDYKDKTVTLEDFPFFSHSVKMASVHPCRHASVMKTLLDRADAALKLRREKMKAGQGSGSEQGMEGLVDEINKLDVSGAHANAVEAAPGEDAEWEEVPHDVADQEVAIRVDQYLVVFLKFIASVTPGIEHDFTMGV.

Residues 85–161 (DFAGDAGHEE…DDDDEAIIRA (77 aa)) are flexible region. C238 serves as the catalytic Glycyl thioester intermediate. Residues 242 to 322 (SVMKTLLDRA…DQEVAIRVDQ (81 aa)) form a handle region region.

It belongs to the ATG3 family. Monomer. Interacts with apg-6/atg8 through an intermediate thioester bond through the C-terminal Gly of apg-6/atg8. Also interacts with the 40 amino acid C-terminal region of the E1-like apg-5/atg7 enzyme. Also interacts with the atg12-apg-4/atg5 conjugate.

The protein localises to the cytoplasm. Functionally, E2 conjugating enzyme required for the cytoplasm to vacuole transport (Cvt) and autophagy. Required for selective autophagic degradation of the nucleus (nucleophagy) as well as for mitophagy which contributes to regulate mitochondrial quantity and quality by eliminating the mitochondria to a basal level to fulfill cellular energy requirements and preventing excess ROS production. Responsible for the E2-like covalent binding of phosphatidylethanolamine to the C-terminal Gly of apg-6/atg8. The atg12-apg-4/atg5 conjugate plays a role of an E3 and promotes the transfer of apg-6/atg8 from apg-3/atg3 to phosphatidylethanolamine (PE). This step is required for the membrane association of apg-6/atg8. The formation of the apg-6/atg8-phosphatidylethanolamine conjugate is essential for autophagy and for the cytoplasm to vacuole transport (Cvt). The apg-6/atg8-PE conjugate mediates tethering between adjacent membranes and stimulates membrane hemifusion, leading to expansion of the autophagosomal membrane during autophagy. The sequence is that of Autophagy-related protein 3 (apg-3) from Neurospora crassa (strain ATCC 24698 / 74-OR23-1A / CBS 708.71 / DSM 1257 / FGSC 987).